A 61-amino-acid polypeptide reads, in one-letter code: U-poneritoxin(01)-Om5a (61 aa).

A signal peptide spans 1-23; it reads MKLSALSLAFAIILMMTIMYTKA. The propeptide occupies 24-41; sequence DADASADAEADADAEAEA. Q59 bears the Glutamine amide mark.

Belongs to the formicidae venom precursor-01 superfamily. Post-translationally, truncated sequences of this peptide have also been found in the venom. It is possible they have been cleaved in the venom. In terms of tissue distribution, expressed by the venom gland.

The protein localises to the secreted. Functionally, acidic peptide with potent hemolytic activities (94.8% at 50 uM). It also shows low antimicrobial activities against E.coli (MIC=50uM), as well as histamine-releasing activity (28.3% at 10 uM). Does not have activity against S.aureus, and S.cerevisiae. The chain is U-poneritoxin(01)-Om5a from Odontomachus monticola (Trap-jaw ant).